Consider the following 1493-residue polypeptide: DNA excision repair protein ERCC-6 (1493 aa).

A disordered region spans residues M1–G39. An N-terminal domain; essential for its chromatin remodeling activity region spans residues M1–Y510. Positions H8–E27 are enriched in polar residues. S10 carries the phosphoserine; by ATM modification. S158 carries the phosphoserine; by CDK2 modification. K170 carries the post-translational modification N6-methylated lysine; by EHMT2. Residue K205 forms a Glycyl lysine isopeptide (Lys-Gly) (interchain with G-Cter in SUMO3) linkage. K255 is covalently cross-linked (Glycyl lysine isopeptide (Lys-Gly) (interchain with G-Cter in SUMO2)). Disordered stretches follow at residues K287–K323 and G344–R453. K297 carries the post-translational modification N6-methylated lysine; by EHMT2. Over residues R353–A363 the composition is skewed to basic and acidic residues. Residues E364 to E392 are compositionally biased toward acidic residues. A phosphoserine mark is found at S429 and S430. N6-methylated lysine; by EHMT2 is present on K448. A phosphoserine mark is found at S486 and S489. Residues W519–G695 enclose the Helicase ATP-binding domain. D532–T539 provides a ligand contact to ATP. The short motif at D646–H649 is the DEAH box element. One can recognise a Helicase C-terminal domain in the interval V843–Y1002. Disordered stretches follow at residues P1042–I1147, H1181–N1247, and R1318–L1384. Position 1054 is an N6-methylated lysine; by EHMT2 (K1054). Polar residues predominate over residues I1123–P1141. S1142 is subject to Phosphoserine. Residues L1200 to K1210 are compositionally biased toward basic residues. Basic and acidic residues-rich tracts occupy residues H1211–R1221 and Q1232–N1247. Over residues K1327–N1336 the composition is skewed to basic residues. The segment covering S1337–E1351 has biased composition (polar residues). Position 1348 is a phosphoserine (S1348). Residues K1352 to D1376 are compositionally biased toward basic and acidic residues. A CSA-interacting motif (CIM) motif is present at residues S1386 to H1398. Residues I1400–L1428 form a ubiquitin-binding domain (UBD) region. The tract at residues V1429–C1493 is winged-helix domain (WHD). The segment at S1446 to C1493 is essential for its interaction with RNA polymerase II, transcription-coupled nucleotide excision repair activity, association with chromatin after UV irradiation and for mediating the UV-induced translocation of ERRC8 to the nuclear matrix.

Belongs to the SNF2/RAD54 helicase family. As to quaternary structure, homodimer. Binds DNA. Interacts with ERCC8. Interacts with RNA polymerase II; interaction is enhanced by UV irradiation. Component of the B-WICH complex, at least composed of SMARCA5/SNF2H, BAZ1B/WSTF, SF3B1, DEK, MYO1C, ERCC6, MYBBP1A and DDX21. Interacts with KIAA1530/UVSSA. Interacts with ELOA and CUL5; the interaction is induced by DNA damaging agents or by inhibitors of RNA polymerase II elongation. Interacts (via WHD region) with RIF1. Interacts with SMARCC2/BAF170, SMARCB1/BAF47 and the neuron-specific chromatin remodeling complex (nBAF complex). Interacts with ERCC5/XPG (via C-terminus); the interaction stimulates ERCC6/CSB binding to the DNA repair bubble and ERCC6/CSB ATPase activity. May form a complex composed of RNA polymerase II, ERCC6/CSB and ERCC5/XPG which associates with the DNA repair bubble during transcription-coupled nucleotide excision repair. Interacts with CAND1, CSTF1, DDX3X, DDX5, DDX17, DDX23, DHX36, HDAC1, HNRNPU, MTA2, PRPF3, PSMD3, RBBP4, SFPQ, SMARCA1, SMARCA2, TOP1, USP7, XRCC5, COPS3, COPS4, COPS6, DDX1, DDX41, GATAD2A, GATAD2B, PRPF4, PSMC5, SF3B2, CTR9, NONO, PSMD12 and TOP2A. Phosphorylated in a cell cycle-dependent manner at Ser-158 by cyclin A-CDK2 and at Ser-10 by ATM in response to DNA damage. Phosphorylation at these two sites promotes the intramolecular interaction of the N-terminal domain with the helicase ATP-binding domain, thereby probably releasing the inhibitory effect of the N-terminal domain on its ATPase activity. Phosphorylation is essential for its chromatin remodeling activity. In terms of processing, ubiquitinated at the C-terminus. Ubiquitination by the CSA complex leads to ERCC6 proteasomal degradation in a UV-dependent manner. Stabilized following interaction with KIAA1530/UVSSA, which promotes recruitment of deubiquitinating enzyme USP7, leading to deubiquitination of ERCC6 thereby preventing UV-induced degradation of ERCC6 by the proteasome. Post-translationally, sumoylation at Lys-205 in an UV-radiation-dependent manner is essential for its transcription-coupled nucleotide excision repair activity.

The protein resides in the nucleus. It is found in the chromosome. The enzyme catalyses ATP + H2O = ADP + phosphate + H(+). Essential factor involved in transcription-coupled nucleotide excision repair (TC-NER), a process during which RNA polymerase II-blocking lesions are rapidly removed from the transcribed strand of active genes. Plays a central role in the initiation of the TC-NER process: specifically recognizes and binds RNA polymerase II stalled at a lesion, and mediates recruitment of ERCC8/CSA, initiating DNA damage excision by TFIIH recruitment. Upon DNA-binding, it locally modifies DNA conformation by wrapping the DNA around itself, thereby modifying the interface between stalled RNA polymerase II and DNA. Acts as a chromatin remodeler at DSBs; DNA-dependent ATPase-dependent activity is essential for this function. Plays an important role in regulating the choice of the DNA double-strand breaks (DSBs) repair pathway and G2/M checkpoint activation; DNA-dependent ATPase activity is essential for this function. Regulates the DNA repair pathway choice by inhibiting non-homologous end joining (NHEJ), thereby promoting the homologous recombination (HR)-mediated repair of DSBs during the S/G2 phases of the cell cycle. Mediates the activation of the ATM- and CHEK2-dependent DNA damage responses thus preventing premature entry of cells into mitosis following the induction of DNA DSBs. Remodels chromatin by evicting histones from chromatin flanking DSBs, limiting RIF1 accumulation at DSBs thereby promoting BRCA1-mediated HR. Required for stable recruitment of ELOA and CUL5 to DNA damage sites. Also involved in UV-induced translocation of ERCC8 to the nuclear matrix. Essential for neuronal differentiation and neuritogenesis; regulates transcription and chromatin remodeling activities required during neurogenesis. The sequence is that of DNA excision repair protein ERCC-6 from Homo sapiens (Human).